The chain runs to 146 residues: Heat-stable 19 kDa antigen (146 aa).

An N-terminal signal peptide occupies residues 1 to 20 (MKFSLLSAIAAAVFVPFTSA).

The protein belongs to the cerato-platanin family. Glycosylated.

Its subcellular location is the secreted. The polypeptide is Heat-stable 19 kDa antigen (CSA) (Coccidioides posadasii (strain C735) (Valley fever fungus)).